The chain runs to 322 residues: Ribonucleoside-diphosphate reductase subunit beta nrdF1 (322 aa).

Residues Asp70, Glu101, and His104 each coordinate Fe cation. The active site involves Tyr108. Residues Glu161, Glu195, and His198 each coordinate Fe cation.

This sequence belongs to the ribonucleoside diphosphate reductase small chain family. As to quaternary structure, tetramer of two alpha and two beta subunits. Requires Fe cation as cofactor.

The catalysed reaction is a 2'-deoxyribonucleoside 5'-diphosphate + [thioredoxin]-disulfide + H2O = a ribonucleoside 5'-diphosphate + [thioredoxin]-dithiol. Provides the precursors necessary for DNA synthesis. Catalyzes the biosynthesis of deoxyribonucleotides from the corresponding ribonucleotides. The polypeptide is Ribonucleoside-diphosphate reductase subunit beta nrdF1 (nrdF1) (Mycobacterium tuberculosis (strain CDC 1551 / Oshkosh)).